The sequence spans 251 residues: Malonyl-[acyl-carrier protein] O-methyltransferase (251 aa).

This sequence belongs to the methyltransferase superfamily.

The catalysed reaction is malonyl-[ACP] + S-adenosyl-L-methionine = malonyl-[ACP] methyl ester + S-adenosyl-L-homocysteine. It functions in the pathway cofactor biosynthesis; biotin biosynthesis. Functionally, converts the free carboxyl group of a malonyl-thioester to its methyl ester by transfer of a methyl group from S-adenosyl-L-methionine (SAM). It allows to synthesize pimeloyl-ACP via the fatty acid synthetic pathway. The sequence is that of Malonyl-[acyl-carrier protein] O-methyltransferase from Pseudescherichia vulneris (Escherichia vulneris).